Here is a 432-residue protein sequence, read N- to C-terminus: Tyrosine-protein phosphatase non-receptor type 1 (432 aa).

Met-1 carries the N-acetylmethionine modification. The Tyrosine-protein phosphatase domain maps to 3-277; it reads MEKEFEEIDK…RFSYLAVIEG (275 aa). At Tyr-20 the chain carries Phosphotyrosine. The residue at position 50 (Ser-50) is a Phosphoserine; by CLK1, CLK2 and PKB/AKT1 or PKB/AKT2. Tyr-66 is subject to Phosphotyrosine; by EGFR. Substrate-binding positions include Asp-181 and 215–221; that span reads CSAGIGR. Cys-215 acts as the Phosphocysteine intermediate in catalysis. The residue at position 215 (Cys-215) is a Cysteine persulfide. Cys-215 is modified (S-nitrosocysteine; in reversibly inhibited form). Phosphoserine; by CLK1 and CLK2 occurs at positions 242 and 243. A substrate-binding site is contributed by Gln-262. Disordered regions lie at residues 297–322 and 335–399; these read EDLDLPPEHVPPPPRPPKRTLEPHNG and SEET…EEHK. Ser-335, Ser-362, and Ser-364 each carry phosphoserine. Residues 354–364 are compositionally biased toward low complexity; it reads SSAMHSVSSMS. Residue Thr-367 is modified to Phosphothreonine.

Belongs to the protein-tyrosine phosphatase family. Non-receptor class 1 subfamily. As to quaternary structure, interacts with EPHA3 (phosphorylated); dephosphorylates EPHA3 and may regulate its trafficking and function. Interacts with MET. Interacts with NCK1. Ser-50 is the major site of phosphorylation as compared to Ser-242 and Ser-243. Activated by phosphorylation at Ser-50. In terms of processing, S-nitrosylation of Cys-215 inactivates the enzyme activity. Post-translationally, sulfhydration at Cys-215 following endoplasmic reticulum stress inactivates the enzyme activity, promoting EIF2AK3/PERK activity. In terms of tissue distribution, most abundant in testis. Also found in kidney, spleen, muscle, liver, heart and brain.

The protein resides in the endoplasmic reticulum membrane. The enzyme catalyses O-phospho-L-tyrosyl-[protein] + H2O = L-tyrosyl-[protein] + phosphate. Its function is as follows. Tyrosine-protein phosphatase which acts as a regulator of endoplasmic reticulum unfolded protein response. Mediates dephosphorylation of EIF2AK3/PERK; inactivating the protein kinase activity of EIF2AK3/PERK. May play an important role in CKII- and p60c-src-induced signal transduction cascades. May regulate the EFNA5-EPHA3 signaling pathway which modulates cell reorganization and cell-cell repulsion. May also regulate the hepatocyte growth factor receptor signaling pathway through dephosphorylation of MET. The protein is Tyrosine-protein phosphatase non-receptor type 1 (Ptpn1) of Mus musculus (Mouse).